Reading from the N-terminus, the 416-residue chain is Cyclin-L1-1 (416 aa).

Residues Lys286–His416 form a disordered region. Basic and acidic residues-rich tracts occupy residues Pro304–Gly315, Ser328–Lys374, Arg384–Asp393, and Arg401–Lys410.

It belongs to the cyclin family. Cyclin L subfamily. In terms of assembly, forms a complex with CDKG1. Interacts with MOS4 and associates with the spliceosome.

It is found in the nucleus. Cognate cyclin for CDKG1. Required for synapsis and male meiosis, and for the proper splicing of specific resistance (R) genes. Involved in regulation of DNA methylation and transcriptional silencing. The chain is Cyclin-L1-1 (CYCL1-1) from Arabidopsis thaliana (Mouse-ear cress).